We begin with the raw amino-acid sequence, 89 residues long: Phytosulfokines 1 (89 aa).

The signal sequence occupies residues methionine 1–glycine 22. The propeptide occupies glutamine 23–aspartate 79. The segment at glutamine 33–phenylalanine 68 is disordered. An N-linked (GlcNAc...) asparagine glycan is attached at asparagine 42. Sulfotyrosine occurs at positions 80 and 82. A propeptide spanning residues aspartate 85–proline 89 is cleaved from the precursor.

Belongs to the phytosulfokine family. Sulfation is important for activity and for the binding to a putative membrane receptor. Post-translationally, PSK-alpha is produced by endopeptidase digestion. PSK-beta is produced from PSK-alpha by exopeptidase digestion. Expressed throughout the seedling. More abundant in fragments containing shoot or root apexes where cells proliferate vigorously.

Its subcellular location is the secreted. Functionally, promotes plant cell differentiation, organogenesis and somatic embryogenesis as well as cell proliferation. In Oryza sativa subsp. indica (Rice), this protein is Phytosulfokines 1 (PSK1).